The sequence spans 444 residues: Protein-serine O-palmitoleoyltransferase porcupine (444 aa).

10 consecutive transmembrane segments (helical) span residues 29–49, 81–101, 128–150, 163–183, 201–221, 249–269, 304–324, 326–346, 383–403, and 420–440; these read NGTL…FLVW, VMIF…KLNG, FLTL…FAIV, TLYL…YVTF, LGVF…AIIS, YFIC…IVVA, FFQS…LLHA, DYQM…ETVF, VLII…FTGM, and WTIW…FLAL. Residue H323 is part of the active site.

It belongs to the membrane-bound acyltransferase family. Porcupine subfamily.

The protein localises to the membrane. It catalyses the reaction [Wnt protein]-L-serine + (9Z)-hexadecenoyl-CoA = [Wnt protein]-O-(9Z)-hexadecenoyl-L-serine + CoA. Functionally, key regulator of the Wnt signaling pathway that mediates lipid modification of Wnt proteins. Acts as a protein-serine O-palmitoleoyltransferase that catalyzes the attachment of palmitoleate, a 16-carbon monounsaturated fatty acid (C16:1(9Z)), to Wnt proteins. Serine palmitoleoylation of WNT proteins is required for efficient binding to frizzled receptors. Has a role in cell specification, specifically in blastomere signaling. Involved in cytosketetal polarity. Required for the orientation of mitotic spindle axis. The sequence is that of Protein-serine O-palmitoleoyltransferase porcupine from Caenorhabditis briggsae.